We begin with the raw amino-acid sequence, 404 residues long: Cysteine desulfurase IscS (404 aa).

Pyridoxal 5'-phosphate-binding positions include 75 to 76 (AT), Asn155, Gln183, and 203 to 205 (SGH). Lys206 bears the N6-(pyridoxal phosphate)lysine mark. A pyridoxal 5'-phosphate-binding site is contributed by Thr243. Cys328 acts as the Cysteine persulfide intermediate in catalysis. Residue Cys328 coordinates [2Fe-2S] cluster.

It belongs to the class-V pyridoxal-phosphate-dependent aminotransferase family. NifS/IscS subfamily. As to quaternary structure, homodimer. Forms a heterotetramer with IscU, interacts with other sulfur acceptors. Pyridoxal 5'-phosphate is required as a cofactor.

It localises to the cytoplasm. It carries out the reaction (sulfur carrier)-H + L-cysteine = (sulfur carrier)-SH + L-alanine. Its pathway is cofactor biosynthesis; iron-sulfur cluster biosynthesis. Master enzyme that delivers sulfur to a number of partners involved in Fe-S cluster assembly, tRNA modification or cofactor biosynthesis. Catalyzes the removal of elemental sulfur atoms from cysteine to produce alanine. Functions as a sulfur delivery protein for Fe-S cluster synthesis onto IscU, an Fe-S scaffold assembly protein, as well as other S acceptor proteins. The chain is Cysteine desulfurase IscS from Edwardsiella ictaluri (strain 93-146).